Here is a 376-residue protein sequence, read N- to C-terminus: Chorismate synthase (376 aa).

NADP(+)-binding residues include Arg39 and Arg45. FMN contacts are provided by residues 115 to 117, Gly276, 291 to 295, and Arg317; these read RSS and KPIPT.

It belongs to the chorismate synthase family. Homotetramer. Requires FMNH2 as cofactor.

It catalyses the reaction 5-O-(1-carboxyvinyl)-3-phosphoshikimate = chorismate + phosphate. It functions in the pathway metabolic intermediate biosynthesis; chorismate biosynthesis; chorismate from D-erythrose 4-phosphate and phosphoenolpyruvate: step 7/7. In terms of biological role, catalyzes the anti-1,4-elimination of the C-3 phosphate and the C-6 proR hydrogen from 5-enolpyruvylshikimate-3-phosphate (EPSP) to yield chorismate, which is the branch point compound that serves as the starting substrate for the three terminal pathways of aromatic amino acid biosynthesis. This reaction introduces a second double bond into the aromatic ring system. The sequence is that of Chorismate synthase from Thermotoga sp. (strain RQ2).